We begin with the raw amino-acid sequence, 418 residues long: tRNA(Met) cytidine acetate ligase (418 aa).

Residues glycine 95, asparagine 161, and arginine 186 each coordinate ATP.

The protein belongs to the TmcAL family.

The protein resides in the cytoplasm. It catalyses the reaction cytidine(34) in elongator tRNA(Met) + acetate + ATP = N(4)-acetylcytidine(34) in elongator tRNA(Met) + AMP + diphosphate. In terms of biological role, catalyzes the formation of N(4)-acetylcytidine (ac(4)C) at the wobble position of elongator tRNA(Met), using acetate and ATP as substrates. First activates an acetate ion to form acetyladenylate (Ac-AMP) and then transfers the acetyl group to tRNA to form ac(4)C34. The protein is tRNA(Met) cytidine acetate ligase of Thermotoga maritima (strain ATCC 43589 / DSM 3109 / JCM 10099 / NBRC 100826 / MSB8).